We begin with the raw amino-acid sequence, 217 residues long: tRNA (guanine-N(7)-)-methyltransferase (217 aa).

S-adenosyl-L-methionine is bound by residues glutamate 44, glutamate 69, aspartate 96, and aspartate 118. The active site involves aspartate 118. Substrate-binding positions include lysine 122, aspartate 154, and 191–194 (TEYE).

It belongs to the class I-like SAM-binding methyltransferase superfamily. TrmB family.

It carries out the reaction guanosine(46) in tRNA + S-adenosyl-L-methionine = N(7)-methylguanosine(46) in tRNA + S-adenosyl-L-homocysteine. It participates in tRNA modification; N(7)-methylguanine-tRNA biosynthesis. Catalyzes the formation of N(7)-methylguanine at position 46 (m7G46) in tRNA. This chain is tRNA (guanine-N(7)-)-methyltransferase, found in Bacillus thuringiensis (strain Al Hakam).